The chain runs to 301 residues: Amine sulfotransferase (301 aa).

Position 46–51 (46–51 (KSGTVW)) interacts with 3'-phosphoadenylyl sulfate. The active-site Proton acceptor is the H101. Residues R123, S131, Y186, 220-225 (ATFENM), and 252-254 (RKG) contribute to the 3'-phosphoadenylyl sulfate site.

It belongs to the sulfotransferase 1 family. In terms of tissue distribution, expressed in male liver.

It is found in the cytoplasm. The enzyme catalyses a primary amine + 3'-phosphoadenylyl sulfate = a sulfamate + adenosine 3',5'-bisphosphate + 2 H(+). In terms of biological role, sulfotransferase that utilizes 3'-phospho-5'-adenylyl sulfate (PAPS) as sulfonate donor to catalyze the N-sulfonation of amines (PTHP, aniline, 4-chloroaniline, 2-naphthylamine). In Oryctolagus cuniculus (Rabbit), this protein is Amine sulfotransferase (SULT3A1).